Here is a 566-residue protein sequence, read N- to C-terminus: Putative ABC transporter ATP-binding protein BC_2655 (566 aa).

2 consecutive ABC transporter domains span residues 5-246 and 300-533; these read ISFE…GLRE and LKVE…ANLR. ATP is bound by residues 39 to 46 and 333 to 340; these read GRSGSGKS and GHNGAGKS.

Belongs to the ABC transporter superfamily.

It is found in the cell membrane. Functionally, probably part of an ABC transporter complex. Responsible for energy coupling to the transport system. The chain is Putative ABC transporter ATP-binding protein BC_2655 from Bacillus cereus (strain ATCC 14579 / DSM 31 / CCUG 7414 / JCM 2152 / NBRC 15305 / NCIMB 9373 / NCTC 2599 / NRRL B-3711).